Reading from the N-terminus, the 1106-residue chain is Probable LRR receptor-like serine/threonine-protein kinase At1g74360 (1106 aa).

The N-terminal stretch at 1–34 (MTMVTRVIMTDDDSQSLCFLCFLLFFFITAIAVA) is a signal peptide. The Extracellular segment spans residues 35–736 (GDSLDSDREV…PRTLLLIWIS (702 aa)). LRR repeat units follow at residues 86 to 109 (RSRVTGINLTDSTISGPLFKNFSA), 110 to 134 (LTELTYLDLSRNTIEGEIPDDLSRC), 136 to 156 (NLKHLNLSHNILEGELSLPGL), 157 to 182 (SNLEVLDLSLNRITGDIQSSFPLFCN), 184 to 204 (LVVANLSTNNFTGRIDDIFNG), 205 to 226 (CRNLKYVDFSSNRFSGEVWTGF), and 227 to 250 (GRLVEFSVADNHLSGNISASMFRG). Asparagine 93 and asparagine 106 each carry an N-linked (GlcNAc...) asparagine glycan. N-linked (GlcNAc...) asparagine glycosylation occurs at asparagine 141. N-linked (GlcNAc...) asparagine glycosylation is found at asparagine 188 and asparagine 193. N-linked (GlcNAc...) asparagine glycans are attached at residues asparagine 242 and asparagine 251. 15 LRR repeats span residues 252–275 (CTLQMLDLSGNAFGGEFPGQVSNC), 276–299 (QNLNVLNLWGNKFTGNIPAEIGSI), 300–323 (SSLKGLYLGNNTFSRDIPETLLNL), 325–346 (NLVFLDLSRNKFGGDIQEIFGR), 348–371 (TQVKYLVLHANSYVGGINSSNILK), 372–396 (LPNLSRLDLGYNNFSGQLPTEISQI), 398–419 (SLKFLILAYNNFSGDIPQEYGN), 420–443 (MPGLQALDLSFNKLTGSIPASFGK), 445–468 (TSLLWLMLANNSLSGEIPREIGNC), 470–492 (SLLWFNVANNQLSGRFHPELTRM), 566–593 (VRTLKISAYLQLSGNKFSGEIPASISQM), 594–617 (DRLSTLHLGFNEFEGKLPPEIGQL), 619–640 (LAFLNLTRNNFSGEIPQEIGNL), 641–664 (KCLQNLDLSFNNFSGNFPTSLNDL), and 666–690 (ELSKFNISYNPFISGAIPTTGQVAT). Asparagine 309 and asparagine 322 each carry an N-linked (GlcNAc...) asparagine glycan. N-linked (GlcNAc...) asparagine glycans are attached at residues asparagine 365, asparagine 374, asparagine 384, and asparagine 408. Residues asparagine 454 and asparagine 467 are each glycosylated (N-linked (GlcNAc...) asparagine). N-linked (GlcNAc...) asparagine glycosylation is found at asparagine 623, asparagine 628, asparagine 652, asparagine 671, asparagine 709, and asparagine 713. The helical transmembrane segment at 737-757 (LALALAFIACLVVSGIVLMVV) threads the bilayer. Over 758 to 1106 (KASREAEIDL…GLSSQGYIEM (349 aa)) the chain is Cytoplasmic. A phosphothreonine mark is found at threonine 803 and threonine 811. Residues 814-1095 (FSEERVVGRG…VKISGKAELF (282 aa)) form the Protein kinase domain. ATP contacts are provided by residues 820-828 (VGRGGYGTV) and lysine 842. The active-site Proton acceptor is the aspartate 941. The residue at position 983 (tyrosine 983) is a Phosphotyrosine. Threonine 991 carries the phosphothreonine modification.

Belongs to the protein kinase superfamily. Ser/Thr protein kinase family.

It is found in the mitochondrion membrane. The catalysed reaction is L-seryl-[protein] + ATP = O-phospho-L-seryl-[protein] + ADP + H(+). It carries out the reaction L-threonyl-[protein] + ATP = O-phospho-L-threonyl-[protein] + ADP + H(+). This Arabidopsis thaliana (Mouse-ear cress) protein is Probable LRR receptor-like serine/threonine-protein kinase At1g74360.